A 91-amino-acid chain; its full sequence is Potassium channel toxin Meg-beta-KTx1 (91 aa).

Residues 1-19 (MQRNLVVLLFLGMVALSSC) form the signal peptide. Positions 20 to 27 (GLREKHFQ) are excised as a propeptide. Residues 54–91 (QFGCPAYQGYCDDHCQDIKKQEGFCHGFKCKCGIPMGF) form the BetaSPN-type CS-alpha/beta domain. 3 cysteine pairs are disulfide-bonded: Cys57/Cys78, Cys64/Cys83, and Cys68/Cys85.

The protein belongs to the long chain scorpion toxin family. Class 1 subfamily. As to expression, expressed by the venom gland.

The protein resides in the secreted. Its function is as follows. Inhibits voltage-gated potassium channel. This chain is Potassium channel toxin Meg-beta-KTx1, found in Mesobuthus gibbosus (Mediterranean checkered scorpion).